Consider the following 474-residue polypeptide: 3-isopropylmalate dehydratase large subunit (474 aa).

Cysteine 355, cysteine 415, and cysteine 418 together coordinate [4Fe-4S] cluster.

The protein belongs to the aconitase/IPM isomerase family. LeuC type 1 subfamily. In terms of assembly, heterodimer of LeuC and LeuD. Requires [4Fe-4S] cluster as cofactor.

The enzyme catalyses (2R,3S)-3-isopropylmalate = (2S)-2-isopropylmalate. It functions in the pathway amino-acid biosynthesis; L-leucine biosynthesis; L-leucine from 3-methyl-2-oxobutanoate: step 2/4. Functionally, catalyzes the isomerization between 2-isopropylmalate and 3-isopropylmalate, via the formation of 2-isopropylmaleate. The protein is 3-isopropylmalate dehydratase large subunit of Shewanella putrefaciens (strain CN-32 / ATCC BAA-453).